Here is a 160-residue protein sequence, read N- to C-terminus: Serine-protein kinase RsbW (160 aa).

This sequence belongs to the anti-sigma-factor family.

It carries out the reaction L-seryl-[protein] + ATP = O-phospho-L-seryl-[protein] + ADP + H(+). The enzyme catalyses L-threonyl-[protein] + ATP = O-phospho-L-threonyl-[protein] + ADP + H(+). Its function is as follows. Negative regulator of sigma-B activity. Phosphorylates and inactivates its specific antagonist protein, RsbV. Upon phosphorylation of RsbV, RsbW is released and binds to sigma-B, thereby blocking its ability to form an RNA polymerase holoenzyme (E-sigma-B). The polypeptide is Serine-protein kinase RsbW (Bacillus anthracis (strain A0248)).